Here is a 67-residue protein sequence, read N- to C-terminus: Phycobilisome 7.8 kDa linker polypeptide, allophycocyanin-associated, core (67 aa).

A CpcD-like domain is found at 1 to 56; it reads MRVFKVTACVPSQTRIRTQRELQNTYFTKLVPYDNWFREQQRIMKMGGKIVKVELA.

This sequence belongs to the phycobilisome linker protein family.

The protein localises to the cellular thylakoid membrane. In terms of biological role, rod linker protein, associated with allophycocyanin. Linker polypeptides determine the state of aggregation and the location of the disk-shaped phycobiliprotein units within the phycobilisome and modulate their spectroscopic properties in order to mediate a directed and optimal energy transfer. This Arthrospira platensis (Spirulina platensis) protein is Phycobilisome 7.8 kDa linker polypeptide, allophycocyanin-associated, core (apcC).